Reading from the N-terminus, the 188-residue chain is Small ribosomal subunit protein uS7 (188 aa).

The protein belongs to the universal ribosomal protein uS7 family. In terms of assembly, part of the 30S ribosomal subunit.

Its function is as follows. One of the primary rRNA binding proteins, it binds directly to 16S rRNA where it nucleates assembly of the head domain of the 30S subunit. Is located at the subunit interface close to the decoding center. In Methanococcus maripaludis (strain DSM 14266 / JCM 13030 / NBRC 101832 / S2 / LL), this protein is Small ribosomal subunit protein uS7.